Here is a 304-residue protein sequence, read N- to C-terminus: PTB domain-containing engulfment adapter protein 1 (304 aa).

Position 16 is a phosphothreonine (Thr-16). One can recognise a PID domain in the interval 21-176; the sequence is SKHFIPYNAK…AGLQKRIQDL (156 aa). Positions 158-202 form a coiled coil; the sequence is KDVETRKQIAGLQKRIQDLETENMELKNKVQDLENQLRITQVSAP. Phosphoserine is present on Ser-223. Residues 223–246 form a disordered region; it reads SPISHQSSMPTRNGTQPPPVPSRS. Residues 225 to 237 show a composition bias toward polar residues; that stretch reads ISHQSSMPTRNGT.

It belongs to the ced-6 family. Homodimer. Interacts with clathrin. Interacts with GDP-bound ARF6, but not with GTP-bound ARF6. Part of a complex composed of GULP1, ACAP1 and ARF6. Interacts with ACAP1, LRP1, MEGF10 and STAB2. In terms of tissue distribution, widely expressed. Detected in macrophages, pancreas, kidney, skeletal muscle, heart, colon, intestine, lung, placenta and ovary.

Its subcellular location is the cytoplasm. In terms of biological role, may function as an adapter protein. Required for efficient phagocytosis of apoptotic cells. Modulates cellular glycosphingolipid and cholesterol transport. May play a role in the internalization and endosomal trafficking of various LRP1 ligands, such as PSAP. Increases cellular levels of GTP-bound ARF6. The protein is PTB domain-containing engulfment adapter protein 1 (GULP1) of Homo sapiens (Human).